The chain runs to 652 residues: Acetyl-coenzyme A synthetase (652 aa).

Residues 191-194, T311, and N335 contribute to the CoA site; that span reads RAGR. Residues 387–389, 411–416, D500, and R515 each bind ATP; these read GEP and DTWWQT. Position 523 (S523) interacts with CoA. Residue R526 participates in ATP binding. Mg(2+)-binding residues include V537, H539, and I542. R584 contributes to the CoA binding site. K609 bears the N6-acetyllysine mark.

The protein belongs to the ATP-dependent AMP-binding enzyme family. The cofactor is Mg(2+). Post-translationally, acetylated. Deacetylation by the SIR2-homolog deacetylase activates the enzyme.

The catalysed reaction is acetate + ATP + CoA = acetyl-CoA + AMP + diphosphate. Its function is as follows. Catalyzes the conversion of acetate into acetyl-CoA (AcCoA), an essential intermediate at the junction of anabolic and catabolic pathways. Acs undergoes a two-step reaction. In the first half reaction, Acs combines acetate with ATP to form acetyl-adenylate (AcAMP) intermediate. In the second half reaction, it can then transfer the acetyl group from AcAMP to the sulfhydryl group of CoA, forming the product AcCoA. Functionally, enables the cell to use acetate during aerobic growth to generate energy via the TCA cycle, and biosynthetic compounds via the glyoxylate shunt. Acetylates CheY, the response regulator involved in flagellar movement and chemotaxis. The polypeptide is Acetyl-coenzyme A synthetase (Escherichia coli O6:H1 (strain CFT073 / ATCC 700928 / UPEC)).